We begin with the raw amino-acid sequence, 366 residues long: Carbamoyl phosphate synthase small chain (366 aa).

Residues 1-171 (MKKRKLILED…KPYVVPGRGL (171 aa)) form a CPSase region. L-glutamine contacts are provided by serine 46, glycine 220, and glycine 222. The 188-residue stretch at 172-359 (RVVMVDFGAK…LNLIKASKVK (188 aa)) folds into the Glutamine amidotransferase type-1 domain. The Nucleophile role is filled by cysteine 247. L-glutamine-binding residues include leucine 248, glutamine 251, asparagine 289, and tyrosine 292. Active-site residues include histidine 332 and glutamate 334.

It belongs to the CarA family. Composed of two chains; the small (or glutamine) chain promotes the hydrolysis of glutamine to ammonia, which is used by the large (or ammonia) chain to synthesize carbamoyl phosphate. Tetramer of heterodimers (alpha,beta)4.

It carries out the reaction hydrogencarbonate + L-glutamine + 2 ATP + H2O = carbamoyl phosphate + L-glutamate + 2 ADP + phosphate + 2 H(+). It catalyses the reaction L-glutamine + H2O = L-glutamate + NH4(+). Its pathway is amino-acid biosynthesis; L-arginine biosynthesis; carbamoyl phosphate from bicarbonate: step 1/1. It functions in the pathway pyrimidine metabolism; UMP biosynthesis via de novo pathway; (S)-dihydroorotate from bicarbonate: step 1/3. Its function is as follows. Small subunit of the glutamine-dependent carbamoyl phosphate synthetase (CPSase). CPSase catalyzes the formation of carbamoyl phosphate from the ammonia moiety of glutamine, carbonate, and phosphate donated by ATP, constituting the first step of 2 biosynthetic pathways, one leading to arginine and/or urea and the other to pyrimidine nucleotides. The small subunit (glutamine amidotransferase) binds and cleaves glutamine to supply the large subunit with the substrate ammonia. This Oceanobacillus iheyensis (strain DSM 14371 / CIP 107618 / JCM 11309 / KCTC 3954 / HTE831) protein is Carbamoyl phosphate synthase small chain.